The chain runs to 830 residues: Venom phosphodiesterase (830 aa).

SMB domains follow at residues 7-50 (PLES…VLPT) and 51-95 (QSWS…RETS). Cystine bridges form between Cys11–Cys15, Cys11–Cys28, Cys15–Cys46, Cys26–Cys28, Cys26–Cys39, Cys32–Cys38, Cys39–Cys46, Cys55–Cys60, Cys55–Cys72, Cys60–Cys90, Cys70–Cys72, Cys70–Cys83, Cys76–Cys82, Cys83–Cys90, Cys101–Cys147, and Cys109–Cys321. An N-linked (GlcNAc...) asparagine glycan is attached at Asn16. The Cell attachment site motif lies at 35-37 (RKA). Residues Asp124 and Thr162 each coordinate a divalent metal cation. The AMP-threonine intermediate role is filled by Thr162. 3 N-linked (GlcNAc...) asparagine glycosylation sites follow: Asn193, Asn236, and Asn247. Lys248 is a binding site for AMP. 4 residues coordinate a divalent metal cation: Asp282, His286, Asp329, and His330. His286 provides a ligand contact to AMP. 6 cysteine pairs are disulfide-bonded: Cys337–Cys434, Cys385–Cys772, Cys518–Cys575, Cys531–Cys632, Cys533–Cys617, and Cys740–Cys750. His439 serves as a coordination point for a divalent metal cation. Asn489 carries an N-linked (GlcNAc...) asparagine glycan. N-linked (GlcNAc...) asparagine glycans are attached at residues Asn723 and Asn742.

The protein belongs to the nucleotide pyrophosphatase/phosphodiesterase family. Monomer cleaved in two subunits; disulfide-linked. Is synthesized as a single-chain protein and is subsequently cleaved to form a two-subunit protein held together with disulfide bonds. Requires a divalent metal cation as cofactor. In terms of tissue distribution, expressed by venom gland.

It localises to the secreted. The catalysed reaction is ADP + H2O = AMP + phosphate + H(+). Hydrolyzes ADP with high activity. Shows weak or no activity on 5'-AMP, 5'-GMP, 3'-AMP, ATP, cAMP, and cGMP. Is devoid of monophosphatase and proteinase activities. Dose-dependently inhibits platelet aggregation induced by ADP and collagen. This Naja atra (Chinese cobra) protein is Venom phosphodiesterase.